A 171-amino-acid chain; its full sequence is Protein ups1 homolog (171 aa).

The tract at residues 1–79 is required for mitochondrial targeting; that stretch reads MTAICTDKTE…LNVNKSYILE (79 aa). The PRELI/MSF1 domain occupies 2–171; sequence TAICTDKTEL…YVIQQKFQPS (170 aa).

The protein localises to the mitochondrion inner membrane. The protein resides in the mitochondrion intermembrane space. Required for maintenance of normal mitochondrial morphology as well as PCP1-dependent processing of MGM1. The chain is Protein ups1 homolog from Schizosaccharomyces pombe (strain 972 / ATCC 24843) (Fission yeast).